The sequence spans 350 residues: Histidinol-phosphate aminotransferase (350 aa).

At K210 the chain carries N6-(pyridoxal phosphate)lysine.

This sequence belongs to the class-II pyridoxal-phosphate-dependent aminotransferase family. Histidinol-phosphate aminotransferase subfamily. In terms of assembly, homodimer. The cofactor is pyridoxal 5'-phosphate.

It catalyses the reaction L-histidinol phosphate + 2-oxoglutarate = 3-(imidazol-4-yl)-2-oxopropyl phosphate + L-glutamate. It participates in amino-acid biosynthesis; L-histidine biosynthesis; L-histidine from 5-phospho-alpha-D-ribose 1-diphosphate: step 7/9. In Pseudomonas syringae pv. syringae (strain B728a), this protein is Histidinol-phosphate aminotransferase.